A 724-amino-acid polypeptide reads, in one-letter code: Palmitoyltransferase AKR1 (724 aa).

The Cytoplasmic segment spans residues 1–308 (MSGQLNVAED…HAKMVTFFTP (308 aa)). 6 ANK repeats span residues 54–84 (PTLV…DVKA), 90–119 (EQVS…DVNI), 124–153 (LEAT…DPLI), 157–187 (QGYN…PVDS), 191–220 (TGKT…DVRV), and 224–253 (GGFT…DVFL). Residues 309–329 (WLILGLILSFFAYFSILLAIL) traverse the membrane as a helical segment. The Lumenal portion of the chain corresponds to 330–331 (GC). A helical transmembrane segment spans residues 332-352 (LLTVLAAGYGLYNFVFPSFIL). The Cytoplasmic segment spans residues 353 to 360 (MKRIVIFK). The chain crosses the membrane as a helical span at residues 361–381 (TPLLAGILSGTIFWLLYVWLF). The Lumenal segment spans residues 382–392 (KMLPATFDDEP). A helical membrane pass occupies residues 393 to 413 (ILNLTVFALFAGVVFLLTKLL). Topologically, residues 414–489 (QSDPGYIVPA…YNYIGFRNHK (76 aa)) are cytoplasmic. A DHHC domain is found at 446–496 (HFCIHSWIRLPLRAKYKRFVHSVILRYDHYCPWIYNYIGFRNHKIFIYFIL). Cys476 serves as the catalytic S-palmitoyl cysteine intermediate. Residues 490-510 (IFIYFILLLDLGILALAKLCL) traverse the membrane as a helical segment. The Lumenal portion of the chain corresponds to 511 to 543 (EYFDELKDHAKNKDALKCSILSKDLCAGFTYDP). A helical transmembrane segment spans residues 544–564 (FTLFLLEWVCVQGMWILALSF). Over 565 to 724 (VQFFECLKGV…ERVISIEEIV (160 aa)) the chain is Cytoplasmic.

It belongs to the DHHC palmitoyltransferase family. AKR/ZDHHC17 subfamily.

The protein resides in the early endosome membrane. It localises to the golgi apparatus membrane. The catalysed reaction is L-cysteinyl-[protein] + hexadecanoyl-CoA = S-hexadecanoyl-L-cysteinyl-[protein] + CoA. In terms of biological role, palmitoyltransferase specific for casein kinase 1. This chain is Palmitoyltransferase AKR1 (AKR1), found in Eremothecium gossypii (strain ATCC 10895 / CBS 109.51 / FGSC 9923 / NRRL Y-1056) (Yeast).